A 372-amino-acid chain; its full sequence is MHNQAPIQRRKSTRIYVGNVPIGDGAPIAVQSMTNTRTTDVEATVNQIKALERVGADIVRVSVPTMDAAEAFKLIKQQVSVPLVADIHFDYRIALKVAEYGVDCLRINPGNIGNEERIRMVVDCARDKNIPIRIGVNAGSLEKDLQEKYGEPTPQALLESAMRHVDHLDRLNFDQFKVSVKASDVFLAVESYRLLAKQIDQPLHLGITEAGGARSGAVKSAIGLGLLLSEGIGDTLRVSLAADPVEEIKVGFDILKSLRIRARGINFIACPTCSRQEFDVIGTVNALEQRLEDIITPMDVSIIGCVVNGPGEALVSTLGVTGGNKKSGLYEDGVRKDRLDNDDMIAQLESRIRAKVSQLDEARRIDVLQVEK.

4 residues coordinate [4Fe-4S] cluster: Cys-270, Cys-273, Cys-305, and Glu-312.

It belongs to the IspG family. It depends on [4Fe-4S] cluster as a cofactor.

The enzyme catalyses (2E)-4-hydroxy-3-methylbut-2-enyl diphosphate + oxidized [flavodoxin] + H2O + 2 H(+) = 2-C-methyl-D-erythritol 2,4-cyclic diphosphate + reduced [flavodoxin]. It participates in isoprenoid biosynthesis; isopentenyl diphosphate biosynthesis via DXP pathway; isopentenyl diphosphate from 1-deoxy-D-xylulose 5-phosphate: step 5/6. In terms of biological role, converts 2C-methyl-D-erythritol 2,4-cyclodiphosphate (ME-2,4cPP) into 1-hydroxy-2-methyl-2-(E)-butenyl 4-diphosphate. The sequence is that of 4-hydroxy-3-methylbut-2-en-1-yl diphosphate synthase (flavodoxin) from Salmonella typhi.